The following is a 362-amino-acid chain: Chorismate synthase (362 aa).

Positions alanine 39–arginine 59 are disordered. 2 residues coordinate NADP(+): arginine 48 and arginine 54. FMN contacts are provided by residues arginine 125–serine 127, asparagine 238–alanine 239, glycine 278, lysine 293–serine 297, and arginine 319.

This sequence belongs to the chorismate synthase family. As to quaternary structure, homotetramer. It depends on FMNH2 as a cofactor.

It carries out the reaction 5-O-(1-carboxyvinyl)-3-phosphoshikimate = chorismate + phosphate. The protein operates within metabolic intermediate biosynthesis; chorismate biosynthesis; chorismate from D-erythrose 4-phosphate and phosphoenolpyruvate: step 7/7. Its function is as follows. Catalyzes the anti-1,4-elimination of the C-3 phosphate and the C-6 proR hydrogen from 5-enolpyruvylshikimate-3-phosphate (EPSP) to yield chorismate, which is the branch point compound that serves as the starting substrate for the three terminal pathways of aromatic amino acid biosynthesis. This reaction introduces a second double bond into the aromatic ring system. This is Chorismate synthase from Aeromonas hydrophila subsp. hydrophila (strain ATCC 7966 / DSM 30187 / BCRC 13018 / CCUG 14551 / JCM 1027 / KCTC 2358 / NCIMB 9240 / NCTC 8049).